A 142-amino-acid polypeptide reads, in one-letter code: MLTHKILGLDVGSKTVGVAISDLMGWTAQGLDTLRINEELEDYGIEQLVTIIKENNVGSVVIGLPKNMNNSIGFRGEASLRYKELLKESLPDIEIIMWDERLSTMAAERSLLEADVSRQKRKKVIDKMAAVFILQGYLDSIQ.

The protein belongs to the YqgF nuclease family.

The protein localises to the cytoplasm. Could be a nuclease involved in processing of the 5'-end of pre-16S rRNA. The chain is Putative pre-16S rRNA nuclease from Staphylococcus haemolyticus (strain JCSC1435).